Reading from the N-terminus, the 422-residue chain is tRNA hydroxylation protein P (422 aa).

The signal sequence occupies residues 1 to 58 (MNQVELLSPAGNLKKLKIALNYGADAVYGGVSHFSLRNRAGKEFTLETFKEGIDYAHA).

This sequence belongs to the peptidase U32 family.

In terms of biological role, involved in prephenate-dependent formation of 5-hydroxyuridine (ho5U) modification at position 34 in tRNAs, the first step in 5-carboxymethoxyuridine (cmo5U) biosynthesis. The sequence is that of tRNA hydroxylation protein P from Helicobacter pylori (strain J99 / ATCC 700824) (Campylobacter pylori J99).